The sequence spans 263 residues: Putative cysteine-rich repeat secretory protein 31 (263 aa).

A signal peptide spans 1-32; the sequence is MHNSYSLSKRLVLVLFLAVVATQLFLIRNVSS. 2 consecutive Gnk2-homologous domains span residues 39–141 and 146–260; these read YLHH…AIEV and YDNN…FYPF.

It belongs to the cysteine-rich repeat secretory protein family.

It is found in the secreted. In Arabidopsis thaliana (Mouse-ear cress), this protein is Putative cysteine-rich repeat secretory protein 31 (CRRSP31).